Here is a 223-residue protein sequence, read N- to C-terminus: Immediate early response gene 2 protein (223 aa).

An N-acetylmethionine modification is found at Met1. A disordered region spans residues 63–172; it reads AALPSDPRLH…PPAQAEGAFP (110 aa). Basic and acidic residues predominate over residues 69 to 78; the sequence is PRLHPPREAE. Positions 125 to 138 are enriched in low complexity; it reads SSLSDGGDAGLVPS.

It belongs to the IER family. In terms of tissue distribution, expressed in activated T-cells (at protein level). Expression increases in metastatic tumor cells (at protein level).

It is found in the cytoplasm. It localises to the nucleus. DNA-binding protein that seems to act as a transcription factor. Involved in the regulation of neuronal differentiation, acts upon JNK-signaling pathway activation and plays a role in neurite outgrowth in hippocampal cells. May mediate with FIBP FGF-signaling in the establishment of laterality in the embryo. Promotes cell motility, seems to stimulate tumor metastasis. The protein is Immediate early response gene 2 protein of Homo sapiens (Human).